Consider the following 212-residue polypeptide: Large ribosomal subunit protein uL1 (212 aa).

The protein belongs to the universal ribosomal protein uL1 family. In terms of assembly, part of the 50S ribosomal subunit.

Functionally, binds directly to 23S rRNA. Probably involved in E site tRNA release. In terms of biological role, protein L1 is also a translational repressor protein, it controls the translation of its operon by binding to its mRNA. This chain is Large ribosomal subunit protein uL1, found in Haloferax volcanii (strain ATCC 29605 / DSM 3757 / JCM 8879 / NBRC 14742 / NCIMB 2012 / VKM B-1768 / DS2) (Halobacterium volcanii).